Reading from the N-terminus, the 348-residue chain is Fructose-1,6-bisphosphatase class 1 (348 aa).

Residues E104, D126, L128, and D129 each coordinate Mg(2+). Substrate contacts are provided by residues 129-132 (DGSS), N221, Y249, and K279. E285 provides a ligand contact to Mg(2+).

The protein belongs to the FBPase class 1 family. In terms of assembly, homotetramer. It depends on Mg(2+) as a cofactor.

It localises to the cytoplasm. It catalyses the reaction beta-D-fructose 1,6-bisphosphate + H2O = beta-D-fructose 6-phosphate + phosphate. Its pathway is carbohydrate biosynthesis; Calvin cycle. The protein is Fructose-1,6-bisphosphatase class 1 of Thermosynechococcus vestitus (strain NIES-2133 / IAM M-273 / BP-1).